A 655-amino-acid chain; its full sequence is p-hydroxybenzoic acid efflux pump subunit AaeB (655 aa).

Transmembrane regions (helical) follow at residues 13–33, 38–58, 69–89, 93–113, 121–141, 152–172, 370–390, 407–427, 431–451, 459–479, and 482–502; these read FAVK…HFQL, WAVL…GGEP, LRII…IAMI, LLMI…SSLV, WGLA…EPLL, EIVI…PRSI, LFWL…IAVV, FIYG…VIIP, QSML…GIEV, MGAL…TFHF, and FLDS…VILL.

This sequence belongs to the aromatic acid exporter ArAE (TC 2.A.85) family.

It localises to the cell inner membrane. Its function is as follows. Forms an efflux pump with AaeA. Could function as a metabolic relief valve, allowing to eliminate certain compounds when they accumulate to high levels in the cell. The chain is p-hydroxybenzoic acid efflux pump subunit AaeB from Escherichia coli (strain SMS-3-5 / SECEC).